Reading from the N-terminus, the 145-residue chain is Synaptojanin-2-binding protein (145 aa).

Over 1–117 the chain is Cytoplasmic; sequence MNGRVDYLVS…VHRGDGEPSG (117 aa). A PDZ domain is found at 13–100; the sequence is EINLTRGPSG…AVSLRVQHRL (88 aa). Residues 118–138 form a helical membrane-spanning segment; sequence VPVAVVLLPVFALTLVAVWAF. The Mitochondrial intermembrane portion of the chain corresponds to 139-145; the sequence is VRYRKQL.

In terms of assembly, binds (via the PDZ domain) to isoform 2A of SYNJ2 (via the unique motif in the C-terminus). Interacts (via C-terminus) with RALBP1. Interacts (via PDZ domain) with ACVR2A (via C-terminus) and ACVR2B (via C-terminus). Forms a ternary complex with ACVR2A and RALBP1. Interacts with MAPK12. Interacts with DLL1; enhances DLL1 protein stability, and promotes notch signaling in endothelial cells. In terms of tissue distribution, widely expressed.

The protein localises to the mitochondrion outer membrane. Its function is as follows. Regulates endocytosis of activin type 2 receptor kinases through the Ral/RALBP1-dependent pathway and may be involved in suppression of activin-induced signal transduction. In Rattus norvegicus (Rat), this protein is Synaptojanin-2-binding protein (Synj2bp).